Here is a 427-residue protein sequence, read N- to C-terminus: Nuclear distribution protein PAC1-2 (427 aa).

The LisH domain maps to 8–40 (QKDDLNKSIAEYLYAQDLTEIADSLCARLSLDY). Residues 58–82 (SVIRLQKKLIESENRYTALQEDIAA) adopt a coiled-coil conformation. 7 WD repeats span residues 106–147 (SHRA…RTLK), 149–187 (HTRE…NAGY), 194–233 (GHEH…CIRT), 236–275 (GHED…MKME), 278–336 (GHGH…ELRT), 339–378 (GHND…CMXV), and 381–420 (AHSH…SRIM).

This sequence belongs to the WD repeat LIS1/nudF family. In terms of assembly, self-associates. Interacts with NDL1 and dynein.

It is found in the cytoplasm. The protein resides in the cytoskeleton. It localises to the spindle pole. In terms of biological role, positively regulates the activity of the minus-end directed microtubule motor protein dynein. May enhance dynein-mediated microtubule sliding by targeting dynein to the microtubule plus end. Required for nuclear migration during vegetative growth as well as development. Required for retrograde early endosome (EE) transport from the hyphal tip. Required for localization of dynein to the mitotic spindle poles. Recruits additional proteins to the dynein complex at SPBs. The sequence is that of Nuclear distribution protein PAC1-2 from Postia placenta (strain ATCC 44394 / Madison 698-R) (Brown rot fungus).